A 690-amino-acid chain; its full sequence is uncharacterized protein (690 aa).

A disordered region spans residues 553 to 601; sequence DESELLENEDKSESLENEDKSESLENEDKSESLENEDKSESLENEKKEK. Residues 560-601 show a composition bias toward basic and acidic residues; that stretch reads NEDKSESLENEDKSESLENEDKSESLENEDKSESLENEKKEK.

The protein belongs to the glycosyltransferase 2 family.

This is an uncharacterized protein from Rickettsia bellii (strain RML369-C).